A 398-amino-acid polypeptide reads, in one-letter code: NADH-quinone oxidoreductase subunit D (398 aa).

The protein belongs to the complex I 49 kDa subunit family. In terms of assembly, NDH-1 is composed of 14 different subunits. Subunits NuoB, C, D, E, F, and G constitute the peripheral sector of the complex.

The protein resides in the cell inner membrane. It catalyses the reaction a quinone + NADH + 5 H(+)(in) = a quinol + NAD(+) + 4 H(+)(out). NDH-1 shuttles electrons from NADH, via FMN and iron-sulfur (Fe-S) centers, to quinones in the respiratory chain. The immediate electron acceptor for the enzyme in this species is believed to be ubiquinone. Couples the redox reaction to proton translocation (for every two electrons transferred, four hydrogen ions are translocated across the cytoplasmic membrane), and thus conserves the redox energy in a proton gradient. This Bradyrhizobium diazoefficiens (strain JCM 10833 / BCRC 13528 / IAM 13628 / NBRC 14792 / USDA 110) protein is NADH-quinone oxidoreductase subunit D.